The primary structure comprises 216 residues: DNA gyrase subunit B (216 aa).

One can recognise a Toprim domain in the interval 140-216 (SELYLVEGDS…PDKLRYHKII (77 aa)).

The protein belongs to the type II topoisomerase GyrB family. Heterotetramer, composed of two GyrA and two GyrB chains. In the heterotetramer, GyrA contains the active site tyrosine that forms a transient covalent intermediate with DNA, while GyrB binds cofactors and catalyzes ATP hydrolysis.

It is found in the cytoplasm. It carries out the reaction ATP-dependent breakage, passage and rejoining of double-stranded DNA.. A type II topoisomerase that negatively supercoils closed circular double-stranded (ds) DNA in an ATP-dependent manner to modulate DNA topology and maintain chromosomes in an underwound state. Negative supercoiling favors strand separation, and DNA replication, transcription, recombination and repair, all of which involve strand separation. Also able to catalyze the interconversion of other topological isomers of dsDNA rings, including catenanes and knotted rings. Type II topoisomerases break and join 2 DNA strands simultaneously in an ATP-dependent manner. The chain is DNA gyrase subunit B (gyrB) from Acinetobacter sp. (strain T4).